A 150-amino-acid chain; its full sequence is MDSTGRNLVYFSSVSENTHRFVQKLGIPAIRIPLHGRIEVDHPYVLLLPTYGGGRATPDLNAGGYVPKQVIAFLNNEHNRSLIRGVIAAGNNNFGAEFAYAGNVVSRKCGVPYLYRFELMGTQDDVDAVRAGLAEFWKEQTCHQPSLQSL.

It belongs to the NrdI family.

Its function is as follows. Probably involved in ribonucleotide reductase function. This chain is Protein NrdI, found in Mycobacterium avium (strain 104).